Consider the following 997-residue polypeptide: Sarcoplasmic/endoplasmic reticulum calcium ATPase 2 (997 aa).

Residues 1–48 lie on the Cytoplasmic side of the membrane; sequence MENAHTKTVEEVLGYFGVNESTGLSLEQVKKLKERWGSNELPAEEGKT. Ser38 bears the Phosphoserine mark. Residues 49–69 traverse the membrane as a helical segment; sequence LLELVIEQFEDLLVRILLLAA. The Lumenal portion of the chain corresponds to 70–89; that stretch reads CISFVLAWFEEGEETITAFV. The helical transmembrane segment at 90-110 threads the bilayer; it reads EPFVILLILVANAIVGVWQER. The Cytoplasmic segment spans residues 111-253; the sequence is NAENAIEALK…QERTPLQQKL (143 aa). The helical transmembrane segment at 254–273 threads the bilayer; the sequence is DEFGEQLSKVISLICIAVWI. The Lumenal portion of the chain corresponds to 274-295; sequence INIGHFNDPVHGGSWIRGAIYY. Residues Tyr294 and Tyr295 each carry the 3'-nitrotyrosine modification. Residues 296-313 traverse the membrane as a helical segment; sequence FKIAVALAVAAIPEGLPA. Ca(2+) is bound by residues Val304, Ala305, Ile307, and Glu309. The Cytoplasmic segment spans residues 314–756; the sequence is VITTCLALGT…EEGRAIYNNM (443 aa). The active-site 4-aspartylphosphate intermediate is the Asp351. Residues Asp351 and Thr353 each coordinate Mg(2+). Residue Thr353 participates in ATP binding. Thr441 is subject to Phosphothreonine. Residues Glu442, Arg489, and Lys514 each contribute to the ATP site. Position 531 is a phosphoserine (Ser531). Arg559 is an ATP binding site. An interaction with HAX1 region spans residues 575 to 594; it reads MNLEDSANFIKYETNLTFVG. Residue Ser580 is modified to Phosphoserine. Positions 624, 625, and 626 each coordinate ATP. Residues Ser661 and Ser663 each carry the phosphoserine modification. Arg677 and Lys683 together coordinate ATP. Asp702 contributes to the Mg(2+) binding site. Asn705 lines the ATP pocket. The helical transmembrane segment at 757-776 threads the bilayer; it reads KQFIRYLISSNVGEVVCIFL. Positions 767 and 770 each coordinate Ca(2+). The Lumenal portion of the chain corresponds to 777–786; the sequence is TAALGFPEAL. A helical transmembrane segment spans residues 787–807; the sequence is IPVQLLWVNLVTDGLPATALG. The interaction with PLN stretch occupies residues 787–807; the sequence is IPVQLLWVNLVTDGLPATALG. The interval 788 to 997 is interaction with TMEM64 and PDIA3; the sequence is PVQLLWVNLV…RNYLEPAILE (210 aa). Ca(2+) is bound by residues Asn795, Thr798, and Asp799. Topologically, residues 808–827 are cytoplasmic; it reads FNPPDLDIMNKPPRNPKEPL. The chain crosses the membrane as a helical span at residues 828-850; sequence ISGWLFFRYLAIGCYVGAATVGA. Over 851 to 896 the chain is Lumenal; it reads AAWWFIAADGGPRVSFYQLSHFLQCKDDNPDFEGVDCAIFESPYPM. Cys875 and Cys887 are joined by a disulfide. The chain crosses the membrane as a helical span at residues 897–916; the sequence is TMALSVLVTIEMCNALNSLS. Residue Glu907 participates in Ca(2+) binding. The Cytoplasmic portion of the chain corresponds to 917–929; that stretch reads ENQSLLRMPPWEN. The helical transmembrane segment at 930 to 948 threads the bilayer; it reads IWLVGSICLSMSLHFLILY. The tract at residues 931–942 is interaction with PLN; the sequence is WLVGSICLSMSL. The Lumenal segment spans residues 949–963; that stretch reads VEPLPLIFQITPLNL. The helical transmembrane segment at 964-984 threads the bilayer; that stretch reads TQWLMVLKISLPVILMDETLK. At 985 to 997 the chain is on the cytoplasmic side; that stretch reads FVARNYLEPAILE.

Belongs to the cation transport ATPase (P-type) (TC 3.A.3) family. Type IIA subfamily. As to quaternary structure, interacts with sarcolipin (SLN); the interaction inhibits ATP2A2 Ca(2+) affinity. Interacts with phospholamban (PLN); the interaction inhibits ATP2A2 Ca(2+) affinity. Interacts with myoregulin (MRLN). Interacts with ARLN and ERLN; the interactions inhibit ATP2A2 Ca(2+) affinity. Interacts with STRIT1/DWORF; the interaction results in activation of ATP2A2. Interacts with the monomeric forms of SLN, PLN, ARLN, ERLN and STRI1/DWORF. Interacts with HAX1. Interacts with S100A8 and S100A9. Interacts with SLC35G1 and STIM1. Interacts with TMEM203. Interacts with TMEM64 and PDIA3. Interacts with TMX1. Interacts with TMX2. Interacts with VMP1; VMP1 competes with PLN and SLN to prevent them from forming an inhibitory complex with ATP2A2. Interacts with ULK1. Interacts with S100A1 in a Ca(2+)-dependent manner. Interacts with TUNAR. Interacts with FLVCR2; this interaction occurs in the absence of heme and promotes ATP2A2 proteasomal degradation; this complex is dissociated upon heme binding. Interacts with FNIP1. In terms of assembly, interacts with TRAM2 (via C-terminus). Requires Mg(2+) as cofactor. Post-translationally, nitrated under oxidative stress. Nitration on the two tyrosine residues inhibits catalytic activity. Serotonylated on Gln residues by TGM2 in response to hypoxia, leading to its inactivation. In terms of tissue distribution, isoform 1 is expressed in the heart.

Its subcellular location is the endoplasmic reticulum membrane. It is found in the sarcoplasmic reticulum membrane. The catalysed reaction is Ca(2+)(in) + ATP + H2O = Ca(2+)(out) + ADP + phosphate + H(+). With respect to regulation, has different conformational states with differential Ca2+ affinity. The E1 conformational state (active form) shows high Ca(2+) affinity, while the E2 state exhibits low Ca(2+) affinity. Binding of ATP allosterically increases its affinity for subsequent binding of Ca2+. Reversibly inhibited by phospholamban (PLN) at low calcium concentrations. PLN inhibits ATP2A2 Ca(2+) affinity by disrupting its allosteric activation by ATP. Inhibited by sarcolipin (SLN) and myoregulin (MRLN). The inhibition is blocked by VMP1. Enhanced by STRIT1/DWORF; STRIT1 increases activity by displacing sarcolipin (SLN), phospholamban (PLN) and myoregulin (MRLN). Stabilizes SERCA2 in its E2 state. Functionally, this magnesium-dependent enzyme catalyzes the hydrolysis of ATP coupled with the translocation of calcium from the cytosol to the sarcoplasmic reticulum lumen. Involved in autophagy in response to starvation. Upon interaction with VMP1 and activation, controls ER-isolation membrane contacts for autophagosome formation. Also modulates ER contacts with lipid droplets, mitochondria and endosomes. In coordination with FLVCR2 mediates heme-stimulated switching from mitochondrial ATP synthesis to thermogenesis. In terms of biological role, involved in the regulation of the contraction/relaxation cycle. Acts as a regulator of TNFSF11-mediated Ca(2+) signaling pathways via its interaction with TMEM64 which is critical for the TNFSF11-induced CREB1 activation and mitochondrial ROS generation necessary for proper osteoclast generation. Association between TMEM64 and SERCA2 in the ER leads to cytosolic Ca(2+) spiking for activation of NFATC1 and production of mitochondrial ROS, thereby triggering Ca(2+) signaling cascades that promote osteoclast differentiation and activation. The polypeptide is Sarcoplasmic/endoplasmic reticulum calcium ATPase 2 (ATP2A2) (Felis catus (Cat)).